The primary structure comprises 1465 residues: DNA polymerase III PolC-type (1465 aa).

The region spanning 431–583 (DVETTGLSAM…YDAEATGRLL (153 aa)) is the Exonuclease domain.

It belongs to the DNA polymerase type-C family. PolC subfamily.

The protein resides in the cytoplasm. The catalysed reaction is DNA(n) + a 2'-deoxyribonucleoside 5'-triphosphate = DNA(n+1) + diphosphate. In terms of biological role, required for replicative DNA synthesis. This DNA polymerase also exhibits 3' to 5' exonuclease activity. This chain is DNA polymerase III PolC-type, found in Streptococcus pyogenes.